Consider the following 419-residue polypeptide: G protein-activated inward rectifier potassium channel 4 (419 aa).

Topologically, residues 1–86 (MAGDSRNAMN…LFTTLVDLKW (86 aa)) are cytoplasmic. The residue at position 5 (S5) is a Phosphoserine. The helical transmembrane segment at 87–111 (RFNLLVFTMVYTITWLFFGFIWWLI) threads the bilayer. Residues 112-135 (AYVRGDLDHVGDQEWIPCVENLSG) lie on the Extracellular side of the membrane. Positions 136 to 147 (FVSAFLFSIETE) form an intramembrane region, helical; Pore-forming. The segment at residues 148–154 (TTIGYGF) is an intramembrane region (pore-forming). A Selectivity filter motif is present at residues 149-154 (TIGYGF). Topologically, residues 155 to 163 (RVITEKCPE) are extracellular. The helical transmembrane segment at 164 to 185 (GIILLLVQAILGSIVNAFMVGC) threads the bilayer. Residues 186-419 (MFVKISQPKK…SVSRATRGSM (234 aa)) are Cytoplasmic-facing. A compositionally biased stretch (low complexity) spans 380–390 (LPSPPLLGGCA). The interval 380-419 (LPSPPLLGGCAEAEKEAEAEHDEEEEPNGLSVSRATRGSM) is disordered. A compositionally biased stretch (polar residues) spans 409-419 (LSVSRATRGSM).

It belongs to the inward rectifier-type potassium channel (TC 1.A.2.1) family. KCNJ5 subfamily. Associates with KCNJ3/GIRK1 or KCNJ6/GRIK2 to form a G-protein-activated heteromultimer pore-forming unit. The resulting inward current is much larger. In terms of tissue distribution, most abundant in heart tissue where it is found predominantly in atria. Also found in brain, kidney, liver, spleen, lung and thymus.

The protein resides in the membrane. The catalysed reaction is K(+)(in) = K(+)(out). With respect to regulation, heteromultimer composed of KCNJ3/GIRK1 and KCNJ5/GIRK4 is activated by phosphatidylinositol 4,5 biphosphate (PtdIns(4,5)P2). Functionally, inward rectifier potassium channels are characterized by a greater tendency to allow potassium to flow into the cell rather than out of it. Their voltage dependence is regulated by the concentration of extracellular potassium; as external potassium is raised, the voltage range of the channel opening shifts to more positive voltages. The inward rectification is mainly due to the blockage of outward current by internal magnesium. Can be blocked by external barium. This potassium channel is controlled by G proteins. This Rattus norvegicus (Rat) protein is G protein-activated inward rectifier potassium channel 4 (Kcnj5).